A 625-amino-acid polypeptide reads, in one-letter code: 1-deoxy-D-xylulose-5-phosphate synthase (625 aa).

Thiamine diphosphate contacts are provided by residues His-80 and 121-123 (GHS). Asp-152 lines the Mg(2+) pocket. Residues 153–154 (GA), Asn-181, Tyr-290, and Glu-371 each bind thiamine diphosphate. Position 181 (Asn-181) interacts with Mg(2+).

This sequence belongs to the transketolase family. DXPS subfamily. As to quaternary structure, homodimer. Mg(2+) serves as cofactor. The cofactor is thiamine diphosphate.

The catalysed reaction is D-glyceraldehyde 3-phosphate + pyruvate + H(+) = 1-deoxy-D-xylulose 5-phosphate + CO2. Its pathway is metabolic intermediate biosynthesis; 1-deoxy-D-xylulose 5-phosphate biosynthesis; 1-deoxy-D-xylulose 5-phosphate from D-glyceraldehyde 3-phosphate and pyruvate: step 1/1. Functionally, catalyzes the acyloin condensation reaction between C atoms 2 and 3 of pyruvate and glyceraldehyde 3-phosphate to yield 1-deoxy-D-xylulose-5-phosphate (DXP). The chain is 1-deoxy-D-xylulose-5-phosphate synthase from Haemophilus influenzae (strain 86-028NP).